A 291-amino-acid chain; its full sequence is 33 kDa chaperonin (291 aa).

2 disulfides stabilise this stretch: Cys237–Cys239 and Cys270–Cys273.

The protein belongs to the HSP33 family. In terms of processing, under oxidizing conditions two disulfide bonds are formed involving the reactive cysteines. Under reducing conditions zinc is bound to the reactive cysteines and the protein is inactive.

It is found in the cytoplasm. In terms of biological role, redox regulated molecular chaperone. Protects both thermally unfolding and oxidatively damaged proteins from irreversible aggregation. Plays an important role in the bacterial defense system toward oxidative stress. The chain is 33 kDa chaperonin from Halalkalibacterium halodurans (strain ATCC BAA-125 / DSM 18197 / FERM 7344 / JCM 9153 / C-125) (Bacillus halodurans).